Reading from the N-terminus, the 238-residue chain is Type III pantothenate kinase (238 aa).

Position 7 to 14 (7 to 14 (DAGNSGLK)) interacts with ATP. Substrate-binding positions include Y88 and 95 to 98 (GVDR). The Proton acceptor role is filled by D97. Position 117 (D117) interacts with K(+). T120 serves as a coordination point for ATP. A substrate-binding site is contributed by T172.

This sequence belongs to the type III pantothenate kinase family. In terms of assembly, homodimer. The cofactor is NH4(+). K(+) serves as cofactor.

The protein localises to the cytoplasm. It carries out the reaction (R)-pantothenate + ATP = (R)-4'-phosphopantothenate + ADP + H(+). Its pathway is cofactor biosynthesis; coenzyme A biosynthesis; CoA from (R)-pantothenate: step 1/5. In terms of biological role, catalyzes the phosphorylation of pantothenate (Pan), the first step in CoA biosynthesis. This chain is Type III pantothenate kinase, found in Hahella chejuensis (strain KCTC 2396).